Reading from the N-terminus, the 351-residue chain is Tropomodulin-2 (351 aa).

Ser-25 carries the phosphoserine modification.

It belongs to the tropomodulin family. As to quaternary structure, binds to the N-terminus of tropomyosin and to actin. As to expression, neuronal-tissue specific.

Its subcellular location is the cytoplasm. It is found in the cytoskeleton. Its function is as follows. Blocks the elongation and depolymerization of the actin filaments at the pointed end. The Tmod/TM complex contributes to the formation of the short actin protofilament, which in turn defines the geometry of the membrane skeleton. This Mus musculus (Mouse) protein is Tropomodulin-2 (Tmod2).